The chain runs to 311 residues: Putative ABC transporter ATP-binding protein MG467 (311 aa).

Residues 84–310 form the ABC transporter domain; that stretch reads ITINKMWKNV…IVSNQLVRPL (227 aa). Residue 122 to 129 coordinates ATP; that stretch reads GSSGSGKT.

Belongs to the ABC transporter superfamily.

The protein is Putative ABC transporter ATP-binding protein MG467 of Mycoplasma genitalium (strain ATCC 33530 / DSM 19775 / NCTC 10195 / G37) (Mycoplasmoides genitalium).